The primary structure comprises 173 residues: Protein Rv3753c (173 aa).

The protein is Protein Rv3753c of Mycobacterium tuberculosis (strain ATCC 25618 / H37Rv).